A 154-amino-acid chain; its full sequence is UPF0756 membrane protein BPUM_2558 (154 aa).

4 consecutive transmembrane segments (helical) span residues 8–28, 54–74, 87–107, and 117–137; these read FLVLLLVIALIAKNNSLILAV, WGVTVITIAVLVPIATGDIGF, WIALGAGILVALIAKNGIVLL, and LVFGTILAVSLFKGVAVGPLI.

Belongs to the UPF0756 family.

Its subcellular location is the cell membrane. In Bacillus pumilus (strain SAFR-032), this protein is UPF0756 membrane protein BPUM_2558.